A 247-amino-acid polypeptide reads, in one-letter code: 5'-nucleotidase SurE (247 aa).

Positions 8, 9, 39, and 91 each coordinate a divalent metal cation.

Belongs to the SurE nucleotidase family. It depends on a divalent metal cation as a cofactor.

The protein resides in the cytoplasm. It carries out the reaction a ribonucleoside 5'-phosphate + H2O = a ribonucleoside + phosphate. Functionally, nucleotidase that shows phosphatase activity on nucleoside 5'-monophosphates. This is 5'-nucleotidase SurE from Ruthia magnifica subsp. Calyptogena magnifica.